The chain runs to 235 residues: Urease accessory protein UreF (235 aa).

This sequence belongs to the UreF family. As to quaternary structure, ureD, UreF and UreG form a complex that acts as a GTP-hydrolysis-dependent molecular chaperone, activating the urease apoprotein by helping to assemble the nickel containing metallocenter of UreC. The UreE protein probably delivers the nickel.

It is found in the cytoplasm. Functionally, required for maturation of urease via the functional incorporation of the urease nickel metallocenter. In Haemophilus influenzae (strain ATCC 51907 / DSM 11121 / KW20 / Rd), this protein is Urease accessory protein UreF.